The chain runs to 570 residues: Dihydroxy-acid dehydratase (570 aa).

C61 provides a ligand contact to [2Fe-2S] cluster. Position 94 (D94) interacts with Mg(2+). C135 is a [2Fe-2S] cluster binding site. Mg(2+) is bound by residues D136 and K137. Residue K137 is modified to N6-carboxylysine. C207 lines the [2Fe-2S] cluster pocket. Position 459 (E459) interacts with Mg(2+). S485 serves as the catalytic Proton acceptor.

The protein belongs to the IlvD/Edd family. In terms of assembly, homodimer. [2Fe-2S] cluster serves as cofactor. The cofactor is Mg(2+).

It catalyses the reaction (2R)-2,3-dihydroxy-3-methylbutanoate = 3-methyl-2-oxobutanoate + H2O. The catalysed reaction is (2R,3R)-2,3-dihydroxy-3-methylpentanoate = (S)-3-methyl-2-oxopentanoate + H2O. Its pathway is amino-acid biosynthesis; L-isoleucine biosynthesis; L-isoleucine from 2-oxobutanoate: step 3/4. It functions in the pathway amino-acid biosynthesis; L-valine biosynthesis; L-valine from pyruvate: step 3/4. Functionally, functions in the biosynthesis of branched-chain amino acids. Catalyzes the dehydration of (2R,3R)-2,3-dihydroxy-3-methylpentanoate (2,3-dihydroxy-3-methylvalerate) into 2-oxo-3-methylpentanoate (2-oxo-3-methylvalerate) and of (2R)-2,3-dihydroxy-3-methylbutanoate (2,3-dihydroxyisovalerate) into 2-oxo-3-methylbutanoate (2-oxoisovalerate), the penultimate precursor to L-isoleucine and L-valine, respectively. This Lactococcus lactis subsp. cremoris (strain MG1363) protein is Dihydroxy-acid dehydratase.